Here is a 415-residue protein sequence, read N- to C-terminus: Multidrug resistance protein MdtA (415 aa).

An N-terminal signal peptide occupies residues 1 to 21; that stretch reads MKGSYKSRWVIVIVVVIAAIA. Disordered stretches follow at residues 32 to 59 and 392 to 415; these read SRSAAPGATKQAQQSPAGGRRGMRSGPL and EAQSATTSEEKATSREYAKKGARS. Basic and acidic residues predominate over residues 399 to 415; that stretch reads SEEKATSREYAKKGARS.

Belongs to the membrane fusion protein (MFP) (TC 8.A.1) family. In terms of assembly, part of a tripartite efflux system composed of MdtA, MdtB and MdtC.

It localises to the cell inner membrane. Its function is as follows. The MdtABC tripartite complex confers resistance against novobiocin and deoxycholate. The sequence is that of Multidrug resistance protein MdtA from Escherichia coli (strain SMS-3-5 / SECEC).